Here is a 556-residue protein sequence, read N- to C-terminus: PPE family protein PPE2 (556 aa).

The interval 8–164 (ASPPEVHSAL…ASYQAVSTAA (157 aa)) is PPE. The interval 201 to 256 (QKIGYTDFYNNVIQPFINWLTNLPFLQAMFSGFDPWLPSLGNPLTFLSPANIAFAL) is SH3-like. The tract at residues 319-340 (LEQTLALLPAALPLLAAPLAPL) is leucine zipper motif. Disordered regions lie at residues 385–418 (TPTP…PPVT) and 443–556 (GTGV…TRVE). The segment covering 400–417 (PTPPLGPPPPPVTAPPPV) has biased composition (pro residues). Positions 456–471 (AEAPASAAAPEEQVQP) are enriched in low complexity. The segment covering 472–481 (QRRRRPKIKQ) has biased composition (basic residues). Positions 473–481 (RRRRPKIKQ) match the Nuclear localization signal motif.

Belongs to the mycobacterial PPE family.

The protein resides in the secreted. The protein localises to the host cytoplasm. It is found in the host nucleus. Inhibits nitric oxide (NO) production in activated macrophages. Acts by inhibiting expression of the host inducible nitric oxide synthase (iNOS). PPE2 is translocated into the host macrophage nucleus, where it interacts with a GATA-binding site overlapping with the TATA box of NOS2 (iNOS) promoter, and strongly inhibits NOS2 gene transcription. Reduction in NO production in turn facilitates intracellular survival of the bacilli inside the macrophage. In addition, disrupts the assembly of NADPH oxidase complex, which inhibits NADPH oxidase-mediated reactive oxygen species (ROS) generation in macrophages and favors M.tuberculosis survival. Acts by interacting with NCF2, the cytosolic subunit of NADPH oxidase, and preventing translocation of NCF2 and NCF1 to the membrane, which causes a reduction of the functional assembly of NADPH oxidase complex and a decrease in NADPH oxidase activity. The protein is PPE family protein PPE2 (PPE2) of Mycobacterium tuberculosis (strain CDC 1551 / Oshkosh).